The following is a 207-amino-acid chain: Ribonuclease HII (207 aa).

The RNase H type-2 domain occupies 18–207 (TYLSGSDEAG…PIKKISKETS (190 aa)). A divalent metal cation-binding residues include aspartate 24, glutamate 25, and aspartate 116.

Belongs to the RNase HII family. The cofactor is Mn(2+). Mg(2+) is required as a cofactor.

The protein resides in the cytoplasm. It carries out the reaction Endonucleolytic cleavage to 5'-phosphomonoester.. In terms of biological role, endonuclease that specifically degrades the RNA of RNA-DNA hybrids. In Mycoplasma mycoides subsp. mycoides SC (strain CCUG 32753 / NCTC 10114 / PG1), this protein is Ribonuclease HII.